The primary structure comprises 325 residues: MATH domain and coiled-coil domain-containing protein At3g58340 (325 aa).

Residues 6–131 form the MATH domain; sequence DKKFCWEIKN…NGQVMIVAEV (126 aa). A coiled-coil region spans residues 266-315; the sequence is KVDWLEKKLDHVKEKKEKEQSGLIILQGIEQQLHELMHKCEKKKSEVLSV.

This chain is MATH domain and coiled-coil domain-containing protein At3g58340, found in Arabidopsis thaliana (Mouse-ear cress).